The chain runs to 82 residues: DNA-directed RNA polymerase subunit Rpo5 (82 aa).

It belongs to the archaeal Rpo5/eukaryotic RPB5 RNA polymerase subunit family. In terms of assembly, part of the RNA polymerase complex.

It is found in the cytoplasm. The catalysed reaction is RNA(n) + a ribonucleoside 5'-triphosphate = RNA(n+1) + diphosphate. Functionally, DNA-dependent RNA polymerase (RNAP) catalyzes the transcription of DNA into RNA using the four ribonucleoside triphosphates as substrates. This chain is DNA-directed RNA polymerase subunit Rpo5, found in Thermococcus celer.